The sequence spans 317 residues: Probable GTP 3',8-cyclase (317 aa).

The Radical SAM core domain occupies 4–223 (RYGRPLEDLR…KSEIREKHFR (220 aa)). Residue R13 participates in GTP binding. [4Fe-4S] cluster is bound by residues C20, C24, and C27. Position 61 (K61) interacts with GTP. G65 contributes to the S-adenosyl-L-methionine binding site. T91 lines the GTP pocket. S115 serves as a coordination point for S-adenosyl-L-methionine. K152 is a binding site for GTP. [4Fe-4S] cluster is bound by residues C246 and C249. 251 to 253 (RVR) contributes to the GTP binding site. C263 provides a ligand contact to [4Fe-4S] cluster.

This sequence belongs to the radical SAM superfamily. MoaA family. [4Fe-4S] cluster serves as cofactor.

The enzyme catalyses GTP + AH2 + S-adenosyl-L-methionine = (8S)-3',8-cyclo-7,8-dihydroguanosine 5'-triphosphate + 5'-deoxyadenosine + L-methionine + A + H(+). The protein operates within cofactor biosynthesis; molybdopterin biosynthesis. Catalyzes the cyclization of GTP to (8S)-3',8-cyclo-7,8-dihydroguanosine 5'-triphosphate. The chain is Probable GTP 3',8-cyclase from Metallosphaera sedula (strain ATCC 51363 / DSM 5348 / JCM 9185 / NBRC 15509 / TH2).